Consider the following 89-residue polypeptide: Venom peptide BmKAPI (89 aa).

The first 22 residues, M1 to S22, serve as a signal peptide directing secretion. Intrachain disulfides connect C28-C66, C37-C62, C41-C55, C46-C86, and C68-C80. Residues C28–C86 enclose the TIL domain.

The protein belongs to the serine protease inhibitor-like (TIL domain-containing) family. In terms of tissue distribution, expressed by the venom gland.

It localises to the secreted. Its function is as follows. Serine protease inhibitor. The protein is Venom peptide BmKAPI of Olivierus martensii (Manchurian scorpion).